The chain runs to 193 residues: GTP cyclohydrolase 1 (193 aa).

3 residues coordinate Zn(2+): cysteine 73, histidine 76, and cysteine 144.

Belongs to the GTP cyclohydrolase I family. Homomer.

The enzyme catalyses GTP + H2O = 7,8-dihydroneopterin 3'-triphosphate + formate + H(+). It functions in the pathway cofactor biosynthesis; 7,8-dihydroneopterin triphosphate biosynthesis; 7,8-dihydroneopterin triphosphate from GTP: step 1/1. The sequence is that of GTP cyclohydrolase 1 from Hyperthermus butylicus (strain DSM 5456 / JCM 9403 / PLM1-5).